Here is a 378-residue protein sequence, read N- to C-terminus: Neutral protease 2 homolog ARB_04336 (378 aa).

The first 19 residues, 1-19 (MKFFTALAAVGALLAPAVA), serve as a signal peptide directing secretion. A propeptide spanning residues 20–186 (LPTPASEASH…DYFSKGLDKR (167 aa)) is cleaved from the precursor. 2 disulfides stabilise this stretch: C192/C262 and C269/C287. Zn(2+) is bound at residue H311. E312 is a catalytic residue. Residues H315 and D326 each coordinate Zn(2+).

This sequence belongs to the peptidase M35 family. It depends on Zn(2+) as a cofactor.

It localises to the secreted. It catalyses the reaction Preferential cleavage of bonds with hydrophobic residues in P1'. Also 3-Asn-|-Gln-4 and 8-Gly-|-Ser-9 bonds in insulin B chain.. Functionally, secreted metalloproteinase that allows assimilation of proteinaceous substrates. Shows high activities on basic nuclear substrates such as histone and protamine. May be involved in virulence. In Arthroderma benhamiae (strain ATCC MYA-4681 / CBS 112371) (Trichophyton mentagrophytes), this protein is Neutral protease 2 homolog ARB_04336.